Reading from the N-terminus, the 266-residue chain is MLKDITLGQYVPLDSPVHRLDPRTKVIATLLFSIALFLLPTLRSVTLAGLPIIIAIVATRLPIHYILRGIKPLWIFIVFTLLVHLLSTPGETAVRLGPFAITWEGLRQGAMVSQRLIWLYAATSLLTLTTSPIALTDGLELLLSPGKRIGLPVHEFAMMTSIALRFIPTLIEETEKIMKAQSSRGADFDSGSLVARVKSLVPLMVPLLLSAFRRADELAMAMEARCYRGGEGRTRMRPLVMSGKDYAVTVAVSGVFILICLWKKAL.

7 helical membrane-spanning segments follow: residues Val-26–Thr-46, Leu-47–Leu-67, Gly-69–Pro-89, Leu-116–Thr-136, Leu-151–Ile-171, Ser-192–Phe-212, and Tyr-246–Leu-266.

The protein belongs to the energy-coupling factor EcfT family. As to quaternary structure, forms a stable energy-coupling factor (ECF) transporter complex composed of 2 membrane-embedded substrate-binding proteins (S component), 2 ATP-binding proteins (A component) and 2 transmembrane proteins (T component). May be able to interact with more than 1 S component at a time.

The protein localises to the cell membrane. In terms of biological role, transmembrane (T) component of an energy-coupling factor (ECF) ABC-transporter complex. Unlike classic ABC transporters this ECF transporter provides the energy necessary to transport a number of different substrates. The polypeptide is Energy-coupling factor transporter transmembrane protein EcfT (Heliobacterium modesticaldum (strain ATCC 51547 / Ice1)).